Here is a 290-residue protein sequence, read N- to C-terminus: O-methyltransferase agiB (290 aa).

D155 provides a ligand contact to S-adenosyl-L-methionine. H194 (proton acceptor) is an active-site residue.

The protein belongs to the class I-like SAM-binding methyltransferase superfamily. Cation-independent O-methyltransferase family.

Its pathway is secondary metabolite biosynthesis. Functionally, O-methyltransferase; part of the gene cluster that mediates the biosynthesis of the aspergillicins A and F, 2 cryptic cyclic hexa-depsipeptides. The hexamodular NRPS agiA catalyzes the condensation of the six amino acid residues including N-Me-L-O-Me-tyrosine, L-proline 1, L-proline 2, D-isoleucine, O-acetyl-threonine, and L-isoleucine. The starting condensation domain (C1) of agiA probably loads acetyl-CoA which is condensed on the N-terminus of threonine by the first module to yield O-acetyl-threonine. The second module then loads L-isoleucine. The epimerase (E) domain on module 2 is probably involved in the formation of the D-isoleucine moiety. Modules 3 and 4 further load 2 successive L-prolines. Module 5 is then involved in the condensation of O-Me-L-tyrosine produced by the O-methyltransferase agiB and the N-methyl transferase (NMeT) domain on module 5 probably catalyzes the N-methylation to yield the N-Me-L-O-Me-tyrosine moiety. The A domain of module 5 loads preferentially O-Me-L-tyrosine, but it can also accept L-phenylalanine, which leads to the production of aspergillicin G. Module 6 then loads the last residue, L-isoleucine. The C-terminal thiolesterase (TE) domain probably cyclizes the peptide using the hydroxy group from threonine to form the cyclic depsipeptide. The polypeptide is O-methyltransferase agiB (Aspergillus flavus (strain ATCC 200026 / FGSC A1120 / IAM 13836 / NRRL 3357 / JCM 12722 / SRRC 167)).